Here is a 306-residue protein sequence, read N- to C-terminus: Replication termination factor 2 (306 aa).

Residues 192 to 306 (RAKLEKKTKK…HWVTHTSYCF (115 aa)) form a disordered region. A compositionally biased stretch (basic and acidic residues) spans 226 to 240 (GKSEEADPDPREKKS). Phosphoserine is present on S287.

It belongs to the rtf2 family. Interacts with DDI2; probably also interacts with DDI1. In terms of processing, undergoes proteasomal degradation, via DDI1 and DDI2. Removal from stalled replisomes and degradation are required for genome stability.

Its subcellular location is the chromosome. Replication termination factor which is a component of the elongating replisome. Required for ATR pathway signaling upon DNA damage and has a positive activity during DNA replication. Might function to facilitate fork pausing at replication fork barriers like the rDNA. May be globally required to stimulate ATR signaling after the fork stalls or encounters a lesion. Interacts with nascent DNA. The chain is Replication termination factor 2 from Rattus norvegicus (Rat).